A 455-amino-acid chain; its full sequence is Single-stranded DNA-binding protein homolog sam-10 (455 aa).

A LisH domain is found at 19-51 (ARDRLTSYIYEYLQQTGASKTAETFKEEVLSTN). Disordered regions lie at residues 217–249 (PPPGGGAQPFPGASGSGGMMPNGAHPHMSLNSP), 281–302 (SDHQPMSAGPAAAAPGATTAGG), 314–343 (GPGSVPQVATTSVGSVGTPSSIGQQLHQPK), and 357–442 (EALT…NGEI). Composition is skewed to low complexity over residues 288 to 298 (AGPAAAAPGAT) and 321 to 336 (VATTSVGSVGTPSSIG). Over residues 396 to 406 (HSVNNNVNPGT) the composition is skewed to polar residues. Positions 407-421 (PGSNPLSNPMSNPPL) are enriched in low complexity.

Ubiquitously expressed with higher expression in the head and tail ganglia, the vulva and PLM neurons.

The protein localises to the cytoplasm. It is found in the nucleus. Its function is as follows. Involved cell autonomously in PLM neuron pre-synaptic differentiation by negatively regulating prk-2 expression and in neurite branch positioning. The protein is Single-stranded DNA-binding protein homolog sam-10 of Caenorhabditis elegans.